The following is a 937-amino-acid chain: Isoleucine--tRNA ligase (937 aa).

The short motif at 58–68 (PYANGDIHIGH) is the 'HIGH' region element. L-isoleucyl-5'-AMP is bound at residue Glu561. The 'KMSKS' region motif lies at 602–606 (KMSKS). Residue Lys605 participates in ATP binding. 4 residues coordinate Zn(2+): Cys900, Cys903, Cys920, and Cys923.

This sequence belongs to the class-I aminoacyl-tRNA synthetase family. IleS type 1 subfamily. As to quaternary structure, monomer. Zn(2+) serves as cofactor.

The protein localises to the cytoplasm. It carries out the reaction tRNA(Ile) + L-isoleucine + ATP = L-isoleucyl-tRNA(Ile) + AMP + diphosphate. Catalyzes the attachment of isoleucine to tRNA(Ile). As IleRS can inadvertently accommodate and process structurally similar amino acids such as valine, to avoid such errors it has two additional distinct tRNA(Ile)-dependent editing activities. One activity is designated as 'pretransfer' editing and involves the hydrolysis of activated Val-AMP. The other activity is designated 'posttransfer' editing and involves deacylation of mischarged Val-tRNA(Ile). In Alcanivorax borkumensis (strain ATCC 700651 / DSM 11573 / NCIMB 13689 / SK2), this protein is Isoleucine--tRNA ligase.